We begin with the raw amino-acid sequence, 420 residues long: Cytochrome P-450 monooxygenase DoxA (420 aa).

Position 367 (Cys-367) interacts with heme.

Belongs to the cytochrome P450 family. Monomer. The cofactor is heme.

It is found in the cytoplasm. The catalysed reaction is 13-deoxydaunorubicin + NADPH + O2 + H(+) = 13-dihydrodaunorubicin + NADP(+) + H2O. The enzyme catalyses 13-dihydrodaunorubicin + NADPH + O2 + H(+) = daunorubicin + NADP(+) + 2 H2O. It catalyses the reaction 13-deoxycarminomycin + NADPH + O2 + H(+) = 13-dihydrocarminomycin + NADP(+) + H2O. It carries out the reaction 13-dihydrocarminomycin + NADPH + O2 + H(+) = carminomycin + NADP(+) + 2 H2O. The catalysed reaction is daunorubicin + NADPH + O2 + H(+) = doxorubicin + NADP(+) + H2O. Its pathway is antibiotic biosynthesis; daunorubicin biosynthesis. The protein operates within antibiotic biosynthesis; carminomycin biosynthesis. It functions in the pathway antibiotic biosynthesis; doxorubicin biosynthesis. Its function is as follows. Involved in the biosynthesis of the anthracyclines carminomycin, daunorubicin (daunomycin) and doxorubicin (adriamycin) which are aromatic polyketide antibiotics that exhibit high cytotoxicity and are widely applied in the chemotherapy of a variety of cancers. In vivo, DoxA catalyzes the C-13 hydroxylation of 13-deoxycarminomycin and 13-deoxydaunorubicin to yield 13-dihydrocarminomycin and 13-dihydrodaunorubicin, respectively, as well as the oxidation of these 13-dihydro-anthracyclines to their respective 13-keto forms, carminomycin and daunorubicin. In vivo, it also catalyzes the C-14 hydroxylation of daunorubicin to form doxorubicin. It can only use NADP. DoxA acts jointly with DnrV. The chain is Cytochrome P-450 monooxygenase DoxA (doxA) from Streptomyces peucetius subsp. caesius.